A 164-amino-acid polypeptide reads, in one-letter code: Interleukin-36 beta (164 aa).

Positions 1-4 are excised as a propeptide; the sequence is MNPQ.

Belongs to the IL-1 family. As to quaternary structure, interacts with cargo receptor TMED10; the interaction mediates the translocation from the cytoplasm into the ERGIC (endoplasmic reticulum-Golgi intermediate compartment) and thereby secretion. In terms of processing, N-terminal truncation leads to a dramatic enhancement of its activity (&gt;1000-fold). As to expression, expression at low levels in tonsil, bone marrow, heart, placenta, lung, testis and colon but not in any hematopoietic cell lines. Not detected in adipose tissue. Expressed at higher levels in psoriatic plaques than in symptomless psoriatic skin or healthy control skin. Increased levels are not detected in inflamed joint tissue.

The protein localises to the cytoplasm. Its subcellular location is the secreted. In terms of biological role, cytokine that binds to and signals through the IL1RL2/IL-36R receptor which in turn activates NF-kappa-B and MAPK signaling pathways in target cells linked to a pro-inflammatory response. Part of the IL-36 signaling system that is thought to be present in epithelial barriers and to take part in local inflammatory response; similar to the IL-1 system with which it shares the coreceptor IL1RAP. Stimulates production of interleukin-6 and interleukin-8 in synovial fibrobasts, articular chondrocytes and mature adipocytes. Induces expression of a number of antimicrobial peptides including beta-defensins 4 and 103 as well as a number of matrix metalloproteases. Seems to be involved in skin inflammatory response by acting on keratinocytes, dendritic cells and indirectly on T-cells to drive tissue infiltration, cell maturation and cell proliferation. In cultured keratinocytes induces the expression of macrophage, T-cell, and neutrophil chemokines, such as CCL3, CCL4, CCL5, CCL2, CCL17, CCL22, CL20, CCL5, CCL2, CCL17, CCL22, CXCL8, CCL20 and CXCL1, and the production of pro-inflammatory cytokines such as TNF-alpha, IL-8 and IL-6. This chain is Interleukin-36 beta, found in Homo sapiens (Human).